Consider the following 256-residue polypeptide: Protein Ta0487 (256 aa).

This sequence belongs to the CinA family.

This chain is Protein Ta0487, found in Thermoplasma acidophilum (strain ATCC 25905 / DSM 1728 / JCM 9062 / NBRC 15155 / AMRC-C165).